We begin with the raw amino-acid sequence, 93 residues long: Aspartyl/glutamyl-tRNA(Asn/Gln) amidotransferase subunit C (93 aa).

This sequence belongs to the GatC family. Heterotrimer of A, B and C subunits.

The enzyme catalyses L-glutamyl-tRNA(Gln) + L-glutamine + ATP + H2O = L-glutaminyl-tRNA(Gln) + L-glutamate + ADP + phosphate + H(+). It carries out the reaction L-aspartyl-tRNA(Asn) + L-glutamine + ATP + H2O = L-asparaginyl-tRNA(Asn) + L-glutamate + ADP + phosphate + 2 H(+). In terms of biological role, allows the formation of correctly charged Asn-tRNA(Asn) or Gln-tRNA(Gln) through the transamidation of misacylated Asp-tRNA(Asn) or Glu-tRNA(Gln) in organisms which lack either or both of asparaginyl-tRNA or glutaminyl-tRNA synthetases. The reaction takes place in the presence of glutamine and ATP through an activated phospho-Asp-tRNA(Asn) or phospho-Glu-tRNA(Gln). This is Aspartyl/glutamyl-tRNA(Asn/Gln) amidotransferase subunit C from Nautilia profundicola (strain ATCC BAA-1463 / DSM 18972 / AmH).